A 100-amino-acid chain; its full sequence is Protein RADIALIS-like 1 (100 aa).

The SANT domain occupies glutamine 9–asparagine 64. Residues phenylalanine 73–glutamine 100 form a disordered region. The span at tyrosine 76–leucine 87 shows a compositional bias: polar residues.

It localises to the nucleus. Probable transcription factor. In Arabidopsis thaliana (Mouse-ear cress), this protein is Protein RADIALIS-like 1 (RL1).